Reading from the N-terminus, the 297-residue chain is Transcription factor MYB1R1 (297 aa).

Residues 44–96 form a disordered region; sequence DLSQYEHPNANNNNNGGDNNESSKVAQDEGYASADDAVQHQSNSGRERKRGVP. Positions 52 to 63 are enriched in low complexity; sequence NANNNNNGGDNN. Residues 89–145 enclose the HTH myb-type domain; that stretch reads RERKRGVPWTEEEHKLFLLGLQKVGKGDWRGISRNFVKTRTPTQVASHAQKYFLRRS. Residues 117 to 141 constitute a DNA-binding region (H-T-H motif); it reads WRGISRNFVKTRTPTQVASHAQKYF.

Its subcellular location is the nucleus. The protein resides in the cytoplasm. It localises to the cytosol. Binds selectively to the DNA sequence 5'-[GA]GATAA-3' and may act as a transcription factor involved in the regulation of drought-responsive genes. Enhances stomatal closure in response to abscisic acid (ABA). Confers drought and salt tolerance. This Solanum tuberosum (Potato) protein is Transcription factor MYB1R1.